The following is a 251-amino-acid chain: MNLNSIPAFDDNYIWVLNDEAGRCLIVDPGDAEPVLNAIAANNWQPEAIFLTHHHHDHVGGVKELVEKFPQIVVYGPQETQDKGTTQVVKDGETAFVLGHEFSVIATPGHTLGHICYFSKPYLFCGDTLFSGGCGRLFEGTASQMYQSINKLSALPDDTLVCCAHEYTLSNMKFALSILPHDLSINDYYRKVKELRAKNQITLPVILKNERQINVFLRTEDIDLINVINEETLLQQPEERFAWLRSKKDRF.

Residues His53, His55, Asp57, His58, His110, Asp127, and His165 each coordinate Zn(2+).

The protein belongs to the metallo-beta-lactamase superfamily. Glyoxalase II family. As to quaternary structure, monomer. Zn(2+) serves as cofactor.

It catalyses the reaction an S-(2-hydroxyacyl)glutathione + H2O = a 2-hydroxy carboxylate + glutathione + H(+). Its pathway is secondary metabolite metabolism; methylglyoxal degradation; (R)-lactate from methylglyoxal: step 2/2. Its function is as follows. Thiolesterase that catalyzes the hydrolysis of S-D-lactoyl-glutathione to form glutathione and D-lactic acid. This is Hydroxyacylglutathione hydrolase from Escherichia coli (strain SE11).